An 86-amino-acid polypeptide reads, in one-letter code: Probable protein BRICK1 (86 aa).

The stretch at 47–81 (EATTKSKLASLNEKLDILERKLEVLEVQVSSATTN) forms a coiled coil.

The protein belongs to the BRK1 family. In terms of assembly, binds SCAR.

It is found in the cytoplasm. The protein resides in the cytoskeleton. Its function is as follows. Involved in regulation of actin and microtubule organization. Part of a WAVE complex that activates the Arp2/3 complex. This is Probable protein BRICK1 from Oryza sativa subsp. japonica (Rice).